Here is a 410-residue protein sequence, read N- to C-terminus: UDP-N-acetylglucosamine--N-acetylmuramyl-(pentapeptide) pyrophosphoryl-undecaprenol N-acetylglucosamine transferase (410 aa).

The disordered stretch occupies residues 1 to 35 (MKDTVSQPAGGRGATAPRPADAASPSCGSSPSADS). Residues 14 to 35 (ATAPRPADAASPSCGSSPSADS) show a composition bias toward low complexity. UDP-N-acetyl-alpha-D-glucosamine-binding positions include 45–47 (TAG), Asn-167, Arg-204, Ser-238, and Gln-334.

It belongs to the glycosyltransferase 28 family. MurG subfamily.

The protein localises to the cell membrane. It catalyses the reaction di-trans,octa-cis-undecaprenyl diphospho-N-acetyl-alpha-D-muramoyl-L-alanyl-D-glutamyl-meso-2,6-diaminopimeloyl-D-alanyl-D-alanine + UDP-N-acetyl-alpha-D-glucosamine = di-trans,octa-cis-undecaprenyl diphospho-[N-acetyl-alpha-D-glucosaminyl-(1-&gt;4)]-N-acetyl-alpha-D-muramoyl-L-alanyl-D-glutamyl-meso-2,6-diaminopimeloyl-D-alanyl-D-alanine + UDP + H(+). Its pathway is cell wall biogenesis; peptidoglycan biosynthesis. Cell wall formation. Catalyzes the transfer of a GlcNAc subunit on undecaprenyl-pyrophosphoryl-MurNAc-pentapeptide (lipid intermediate I) to form undecaprenyl-pyrophosphoryl-MurNAc-(pentapeptide)GlcNAc (lipid intermediate II). This chain is UDP-N-acetylglucosamine--N-acetylmuramyl-(pentapeptide) pyrophosphoryl-undecaprenol N-acetylglucosamine transferase, found in Mycobacterium tuberculosis (strain ATCC 25177 / H37Ra).